We begin with the raw amino-acid sequence, 350 residues long: GTPase Obg (350 aa).

The Obg domain occupies 1–159; sequence MRFIDQTEIF…FRLHLELKLL (159 aa). In terms of domain architecture, OBG-type G spans 160 to 328; it reads AEVGIIGLPN…LLQQVWEELD (169 aa). Residues 166-173, 191-195, 213-216, 280-283, and 309-311 contribute to the GTP site; these read GLPNAGKS, FTTLI, DIPG, NKID, and SAV. 2 residues coordinate Mg(2+): Ser-173 and Thr-193.

Belongs to the TRAFAC class OBG-HflX-like GTPase superfamily. OBG GTPase family. Monomer. Mg(2+) is required as a cofactor.

It is found in the cytoplasm. An essential GTPase which binds GTP, GDP and possibly (p)ppGpp with moderate affinity, with high nucleotide exchange rates and a fairly low GTP hydrolysis rate. Plays a role in control of the cell cycle, stress response, ribosome biogenesis and in those bacteria that undergo differentiation, in morphogenesis control. The polypeptide is GTPase Obg (Acaryochloris marina (strain MBIC 11017)).